A 340-amino-acid polypeptide reads, in one-letter code: Ferrochelatase (340 aa).

2 residues coordinate Fe cation: H202 and E283.

This sequence belongs to the ferrochelatase family.

The protein resides in the cytoplasm. It carries out the reaction heme b + 2 H(+) = protoporphyrin IX + Fe(2+). The protein operates within porphyrin-containing compound metabolism; protoheme biosynthesis; protoheme from protoporphyrin-IX: step 1/1. In terms of biological role, catalyzes the ferrous insertion into protoporphyrin IX. The chain is Ferrochelatase from Acinetobacter baylyi (strain ATCC 33305 / BD413 / ADP1).